The following is a 27-amino-acid chain: Defensin-like protein 2 (27 aa).

Gln1 bears the Pyrrolidone carboxylic acid mark.

The protein belongs to the DEFL family. Forms oligomers in its native state.

Its function is as follows. Possesses some antifungal activity sensitive to inorganic cations and antibacterial activity against B.megaterium. The sequence is that of Defensin-like protein 2 from Brassica campestris (Field mustard).